The following is an 842-amino-acid chain: Glycogen phosphorylase, muscle form (842 aa).

S2 carries the post-translational modification N-acetylserine. A Phosphoserine; by PHK; in form phosphorylase A modification is found at S15. S26 bears the Phosphoserine mark. Positions 43 and 76 each coordinate AMP. Phosphotyrosine occurs at positions 204 and 227. 310–319 (RRFKSSKFGC) contacts AMP. S430 carries the phosphoserine modification. Position 473 is a phosphotyrosine (Y473). At S514 the chain carries Phosphoserine. N6-(pyridoxal phosphate)lysine is present on K681. Phosphoserine is present on residues S747 and S748.

The protein belongs to the glycogen phosphorylase family. As to quaternary structure, homodimer. Homotetramer; to form the enzymatically active phosphorylase A. Pyridoxal 5'-phosphate serves as cofactor. Post-translationally, phosphorylation of Ser-15 converts phosphorylase B (unphosphorylated) to phosphorylase A.

It catalyses the reaction [(1-&gt;4)-alpha-D-glucosyl](n) + phosphate = [(1-&gt;4)-alpha-D-glucosyl](n-1) + alpha-D-glucose 1-phosphate. With respect to regulation, allosterically regulated through the non-covalent binding of metabolites, being activated by AMP and inhibited by ATP, ADP, and glucose-6-phosphate. The activity is also controlled by post-translational modifications including phosphorylation. Its function is as follows. Allosteric enzyme that catalyzes the rate-limiting step in glycogen catabolism, the phosphorolytic cleavage of glycogen to produce glucose-1-phosphate, and plays a central role in maintaining cellular and organismal glucose homeostasis. This chain is Glycogen phosphorylase, muscle form, found in Rattus norvegicus (Rat).